The following is a 462-amino-acid chain: Probable acid phosphatase SPBC4.06 (462 aa).

The active-site Nucleophile is the His-35. Residue Asp-330 is the Proton donor of the active site.

This sequence belongs to the histidine acid phosphatase family.

The protein resides in the mitochondrion. It carries out the reaction a phosphate monoester + H2O = an alcohol + phosphate. The polypeptide is Probable acid phosphatase SPBC4.06 (Schizosaccharomyces pombe (strain 972 / ATCC 24843) (Fission yeast)).